The primary structure comprises 300 residues: Transcription factor E2F5 (300 aa).

A DNA-binding region spans residues 2-73 (GSSRHEKSLG…KNSIQWKGVG (72 aa)). The leucine-zipper stretch occupies residues 31 to 53 (LKAAADTLAVRQKRRIYDITNVL). The short motif at 36–73 (DTLAVRQKRRIYDITNVLEGIDLIEKKSKNSIQWKGVG) is the DEF box element. The tract at residues 74–170 (AGCNTKEVID…GQNGQKKYQI (97 aa)) is dimerization. Positions 191 to 250 (SKPVVFPVPPPDDLTQPSSQSSTSVTPPKSTMAAQNLPEQHVSERSQNFQQTPATEISSG) are disordered. Positions 203 to 221 (DLTQPSSQSSTSVTPPKST) are enriched in low complexity. A compositionally biased stretch (polar residues) spans 235–246 (RSQNFQQTPATE). The tract at residues 242-300 (TPATEISSGSISGDIIDELMSSDVFPLLRLSPTPADDYNFNLDDNEGVCDLFDVQILNY) is transactivation. An RBL2 association region spans residues 277–294 (DDYNFNLDDNEGVCDLFD).

Belongs to the E2F/DP family. Component of the DRTF1/E2F transcription factor complex. Binds cooperatively with DP-1 to E2F sites. Interaction with retinoblastoma protein RB1 or proteins RBL1 and RBL2 inhibits the E2F transactivation domain. Component of the DREAM complex (also named LINC complex) at least composed of E2F4, E2F5, LIN9, LIN37, LIN52, LIN54, MYBL1, MYBL2, RBL1, RBL2, RBBP4, TFDP1 and TFDP2. The complex exists in quiescent cells where it represses cell cycle-dependent genes. It dissociates in S phase when LIN9, LIN37, LIN52 and LIN54 form a subcomplex that binds to MYBL2. Found in placenta followed by kidney, lung and brain.

The protein resides in the nucleus. Functionally, transcriptional activator that binds to E2F sites, these sites are present in the promoter of many genes whose products are involved in cell proliferation. May mediate growth factor-initiated signal transduction. It is likely involved in the early responses of resting cells to growth factor stimulation. Specifically required for multiciliate cell differentiation: together with MCIDAS and E2F5, binds and activate genes required for centriole biogenesis. In Rattus norvegicus (Rat), this protein is Transcription factor E2F5 (E2f5).